Consider the following 593-residue polypeptide: Dihydroxy-acid dehydratase (593 aa).

A compositionally biased stretch (acidic residues) spans 1 to 17 (MSQQTEPDDDAALDGDE). The tract at residues 1–40 (MSQQTEPDDDAALDGDEPGAYGKDERLRSREVTEGPERAP) is disordered. Over residues 22–40 (GKDERLRSREVTEGPERAP) the composition is skewed to basic and acidic residues. A [2Fe-2S] cluster-binding site is contributed by Cys72. Mg(2+) is bound at residue Asp104. Position 145 (Cys145) interacts with [2Fe-2S] cluster. Asp146 and Lys147 together coordinate Mg(2+). At Lys147 the chain carries N6-carboxylysine. Cys217 is a [2Fe-2S] cluster binding site. Glu475 provides a ligand contact to Mg(2+). Ser501 acts as the Proton acceptor in catalysis.

It belongs to the IlvD/Edd family. Homodimer. The cofactor is [2Fe-2S] cluster. Mg(2+) is required as a cofactor.

It carries out the reaction (2R)-2,3-dihydroxy-3-methylbutanoate = 3-methyl-2-oxobutanoate + H2O. It catalyses the reaction (2R,3R)-2,3-dihydroxy-3-methylpentanoate = (S)-3-methyl-2-oxopentanoate + H2O. The protein operates within amino-acid biosynthesis; L-isoleucine biosynthesis; L-isoleucine from 2-oxobutanoate: step 3/4. Its pathway is amino-acid biosynthesis; L-valine biosynthesis; L-valine from pyruvate: step 3/4. Functions in the biosynthesis of branched-chain amino acids. Catalyzes the dehydration of (2R,3R)-2,3-dihydroxy-3-methylpentanoate (2,3-dihydroxy-3-methylvalerate) into 2-oxo-3-methylpentanoate (2-oxo-3-methylvalerate) and of (2R)-2,3-dihydroxy-3-methylbutanoate (2,3-dihydroxyisovalerate) into 2-oxo-3-methylbutanoate (2-oxoisovalerate), the penultimate precursor to L-isoleucine and L-valine, respectively. This Natronomonas pharaonis (strain ATCC 35678 / DSM 2160 / CIP 103997 / JCM 8858 / NBRC 14720 / NCIMB 2260 / Gabara) (Halobacterium pharaonis) protein is Dihydroxy-acid dehydratase.